The chain runs to 867 residues: MSTVMNTQYRKPLPGTALDYFDTREAIEAIAPGAYAKLPYTSRVLAENLVRRCEPEMLTASLKQIIESKQELDFPWFPARVVCHDILGQTALVDLAGLRDAIAAKGGDPAQVNPVVPTQLIVDHSLAVEYGGFDKDAFAKNRAIEDRRNEDRFHFINWTQKAFKNIDVIPQGNGIMHQINLERMSPVIHARNGVAFPDTLVGTDSHTPHVDALGVIAIGVGGLEAESVMLGRASYMRLPDIIGVELTGKPQPGITATDIVLALTEFLRAQKVVSSYLEFFGEGAEALTLGDRATISNMTPEFGATAAMFYIDQQTLDYLTLTGREAEQVKLVETYAKTAGLWSDDLKQAVYPRTLHFDLSSVVRTIAGPSNPHARVPTSELAARGISGEVENEPGLMPDGAVIIAAITSCTNTSNPRNVIAAGLLARNANAKGLTRKPWVKTSLAPGSKAVQLYLEEANLLPELESLGFGIVGFACTTCNGMSGALDPVIQQEVIDRDLYATAVLSGNRNFDGRIHPYAKQAFLASPPLVVAYAIAGTIRFDIEKDVLGLDKDGKPVRLINIWPSDAEIDAVIAASVKPEQFRKVYEPMFDLSVDYGDKVSPLYDWRPQSTYIRRPPYWEGALAGERTLKGMRPLAVLGDNITTDHLSPSNAIMMDSAAGEYLHKMGLPEEDFNSYATHRGDHLTAQRATFANPKLKNEMAIVDGKVKQGSLARIEPEGIVTRMWEAIETYMDRKQPLIIIAGADYGQGSSRDWAAKGVRLAGVEAIVAEGFERIHRTNLVGMGVLPLEFKAGENRATYGIDGTEVFDVIGSIAPRADLTVIITRKNGERVEVPVTCRLDTAEEVSIYEAGGVLQRFAQDFLESNLK.

[4Fe-4S] cluster contacts are provided by cysteine 410, cysteine 476, and cysteine 479.

The protein belongs to the aconitase/IPM isomerase family. [4Fe-4S] cluster is required as a cofactor.

The enzyme catalyses (2S,3S)-2-methylcitrate = 2-methyl-trans-aconitate + H2O. The catalysed reaction is citrate = D-threo-isocitrate. The protein operates within organic acid metabolism; propanoate degradation. Inhibited by ferricyanide and EDTA. In terms of biological role, involved in the catabolism of short chain fatty acids (SCFA) via the 2-methylcitrate cycle II (propionate degradation route). In vivo under anaerobic conditions, AcnD catalyzes the stereospecific dehydration of (2S,3S)-methylcitrate (2-MC) to yield the trans isomer of 2-methyl-aconitate (2-MCA). AcnD can also accept citrate and cis-aconitate, but with a lower efficiency. 2-methylisocitrate and isocitrate are not substrates. In Shewanella oneidensis (strain ATCC 700550 / JCM 31522 / CIP 106686 / LMG 19005 / NCIMB 14063 / MR-1), this protein is 2-methylcitrate dehydratase (2-methyl-trans-aconitate forming) (acnD).